Here is a 673-residue protein sequence, read N- to C-terminus: Ribonucleoprotein PTB-binding 2 (673 aa).

Residues 1-17 show a composition bias toward gly residues; that stretch reads MAARGGGAGGAGSGSGP. The segment at 1 to 34 is disordered; the sequence is MAARGGGAGGAGSGSGPSAGTAGEAAEPALRPGE. The span at 18–29 shows a compositional bias: low complexity; the sequence is SAGTAGEAAEPA. RRM domains are found at residues 58-129, 131-209, and 220-298; these read RKIL…LQPT, ALLC…WMDV, and KCLC…FCAP. Positions 481 to 549 are disordered; sequence QLPAGQAGPG…KGTEVASKNQ (69 aa). The segment covering 499 to 512 has biased composition (low complexity); that stretch reads SASVSISEASFSGS. Residues 529–549 show a composition bias toward polar residues; the sequence is TGNQKTPQSQPKGTEVASKNQ.

In terms of assembly, interacts with PTBP1 and RAVER1. Expressed throughout embryogenesis. Detected at low levels in adult lung, brain and kidney, but not in the other tissues tested.

It localises to the nucleus. The protein localises to the cytoplasm. May bind single-stranded nucleic acids. The polypeptide is Ribonucleoprotein PTB-binding 2 (Raver2) (Mus musculus (Mouse)).